The chain runs to 453 residues: Na(+)/H(+) antiporter NhaA 2 (453 aa).

Helical transmembrane passes span 23-43, 74-94, 111-131, 139-159, 168-188, 191-211, 214-234, 235-255, 316-336, 345-365, 386-406, and 419-439; these read FLHIEAVSGIVLLIAAVAALI, LHFWINDGLMTIFFLVVGMEI, LPMAAAVGGVAVPALLYLSFG, GWAVPTATDIAFAVGVLALLG, VFLLALAIIDDIIAVLIIAFF, GGLDYTGFGVALIGLLMVIGL, IGVGSAYAYVLPGAIVWLGIL, LTGAHPTLAGVVLGLMTPVTA, VAFGIMPVFALANAGVSLSGV, WVMIAVAVALVAGKPLGIVSV, IVLVGLLAGIGFTMSIFIANL, and LGVLSASLIAAVLGLTWGVWS.

The protein belongs to the NhaA Na(+)/H(+) (TC 2.A.33) antiporter family.

The protein resides in the cell inner membrane. The enzyme catalyses Na(+)(in) + 2 H(+)(out) = Na(+)(out) + 2 H(+)(in). Its function is as follows. Na(+)/H(+) antiporter that extrudes sodium in exchange for external protons. The sequence is that of Na(+)/H(+) antiporter NhaA 2 from Pseudomonas putida (strain ATCC 700007 / DSM 6899 / JCM 31910 / BCRC 17059 / LMG 24140 / F1).